Consider the following 443-residue polypeptide: 3-phosphoshikimate 1-carboxyvinyltransferase (443 aa).

A disordered region spans residues 1 to 25; that stretch reads MSHSAEPLPMTARRSGPLTGEAQVP. 3 residues coordinate 3-phosphoshikimate: K28, S29, and R33. K28 contributes to the phosphoenolpyruvate binding site. Residues G101 and R129 each contribute to the phosphoenolpyruvate site. Residues S174, Q176, D326, and K353 each contribute to the 3-phosphoshikimate site. Q176 contributes to the phosphoenolpyruvate binding site. The active-site Proton acceptor is the D326. Phosphoenolpyruvate is bound by residues R357 and R400.

This sequence belongs to the EPSP synthase family. Monomer.

Its subcellular location is the cytoplasm. The catalysed reaction is 3-phosphoshikimate + phosphoenolpyruvate = 5-O-(1-carboxyvinyl)-3-phosphoshikimate + phosphate. It participates in metabolic intermediate biosynthesis; chorismate biosynthesis; chorismate from D-erythrose 4-phosphate and phosphoenolpyruvate: step 6/7. Its function is as follows. Catalyzes the transfer of the enolpyruvyl moiety of phosphoenolpyruvate (PEP) to the 5-hydroxyl of shikimate-3-phosphate (S3P) to produce enolpyruvyl shikimate-3-phosphate and inorganic phosphate. The sequence is that of 3-phosphoshikimate 1-carboxyvinyltransferase from Paracoccus denitrificans (strain Pd 1222).